The sequence spans 211 residues: Protein-methionine-sulfoxide reductase heme-binding subunit MsrQ (211 aa).

Helical transmembrane passes span 10-30, 82-102, 116-136, and 153-173; these read WLKVCLHLAGLLPFLWLVWAI, LWCFAWATLHLTSYALLELGV, PYLTLGIISWIILLALAFTST, and FVYLVAILAPIHYLWSVKIIS.

It belongs to the MsrQ family. Heterodimer of a catalytic subunit (MsrP) and a heme-binding subunit (MsrQ). Requires FMN as cofactor. It depends on heme b as a cofactor.

It localises to the cell inner membrane. Functionally, part of the MsrPQ system that repairs oxidized periplasmic proteins containing methionine sulfoxide residues (Met-O), using respiratory chain electrons. Thus protects these proteins from oxidative-stress damage caused by reactive species of oxygen and chlorine generated by the host defense mechanisms. MsrPQ is essential for the maintenance of envelope integrity under bleach stress, rescuing a wide series of structurally unrelated periplasmic proteins from methionine oxidation, including the primary periplasmic chaperone SurA and the lipoprotein Pal. MsrQ provides electrons for reduction to the reductase catalytic subunit MsrP, using the quinone pool of the respiratory chain. This is Protein-methionine-sulfoxide reductase heme-binding subunit MsrQ from Escherichia coli O157:H7.